A 93-amino-acid chain; its full sequence is NADH-ubiquinone oxidoreductase chain 4L (93 aa).

3 helical membrane passes run 3-23 (LTIL…GPLG), 27-47 (IIKL…LIIL), and 55-75 (ILGL…SAIG).

The protein belongs to the complex I subunit 4L family.

Its subcellular location is the mitochondrion membrane. The catalysed reaction is a ubiquinone + NADH + 5 H(+)(in) = a ubiquinol + NAD(+) + 4 H(+)(out). Its function is as follows. Core subunit of the mitochondrial membrane respiratory chain NADH dehydrogenase (Complex I) that is believed to belong to the minimal assembly required for catalysis. Complex I functions in the transfer of electrons from NADH to the respiratory chain. The immediate electron acceptor for the enzyme is believed to be ubiquinone. In Wickerhamomyces canadensis (Yeast), this protein is NADH-ubiquinone oxidoreductase chain 4L (ND4L).